The following is a 111-amino-acid chain: Small ribosomal subunit protein bS16 (111 aa).

The interval Met-92–Ala-111 is disordered.

This sequence belongs to the bacterial ribosomal protein bS16 family.

This chain is Small ribosomal subunit protein bS16, found in Rickettsia akari (strain Hartford).